Here is a 268-residue protein sequence, read N- to C-terminus: Tropinone reductase homolog At2g29150 (268 aa).

NADP(+) is bound at residue 22-46 (LVTGGSKGLGEAVVEELAMLGARVH). Residue Ser155 coordinates substrate. The active-site Proton acceptor is the Tyr167.

The protein belongs to the short-chain dehydrogenases/reductases (SDR) family. SDR65C subfamily.

Enantiospecific reductase active on cyclic monoterpenes and small flexible lipophilic carbonyls. No activity with tropinone, nitrogen-containing tropinone analogs, tropine or pseudotropine as substrate. In Arabidopsis thaliana (Mouse-ear cress), this protein is Tropinone reductase homolog At2g29150.